Here is a 230-residue protein sequence, read N- to C-terminus: Response regulator MprA (230 aa).

Residues 4–118 (RILVVDDDRA…ELLARMRALL (115 aa)) enclose the Response regulatory domain. D48 carries the 4-aspartylphosphate modification. The segment at residues 129–227 (SMAMRFSDLT…VRGVGYVLRE (99 aa)) is a DNA-binding region (ompR/PhoB-type).

Monomer. Interaction with each conserved 8-bp repeat requires tandem binding by two protein monomers. In terms of processing, phosphorylated and dephosphorylated by MprB.

The protein localises to the cytoplasm. Functionally, member of the two-component regulatory system MprB/MprA which contributes to maintaining a balance among several systems involved in stress resistance and is required for establishment and maintenance of persistent infection in the host. Functions as a transcriptional regulator that recognizes a 19-bp nucleotide motif comprizing two loosely conserved 8-bp direct DNA-binding motif repeats separated by a 3-bp spacer region. MprB/MprA up-regulates expression of mprA and pepD. This is Response regulator MprA (mprA) from Mycobacterium bovis (strain ATCC BAA-935 / AF2122/97).